Consider the following 300-residue polypeptide: (R)-3-hydroxydecanoyl-ACP:CoA transacylase (300 aa).

Residues 29 to 253 (TIILVNGSLS…HTIRNAGHFI (225 aa)) form the AB hydrolase-1 domain.

It participates in polyester biosynthesis; polyhydroxyalkanoate biosynthesis. Catalyzes the transfer of the acyl moiety from in vitro synthesized 3-hydroxydecanoyl-CoA to acyl carrier protein. This Pseudomonas aeruginosa (strain ATCC 15692 / DSM 22644 / CIP 104116 / JCM 14847 / LMG 12228 / 1C / PRS 101 / PAO1) protein is (R)-3-hydroxydecanoyl-ACP:CoA transacylase (phaG).